The chain runs to 624 residues: MTMLRKIIGWILLLCIIPLFAFTVIASGKEVKQMKSLDQVLDKNIDLKDISLVQNSYMYDRDGSLVSEIVSDHENRVLVPFNKIPEEVKQIFLTSEDRHFYEHKGFDFMGMVRATASNVKDKKIDQGASTITQQLSRNLYLSHERSFSRKLTELAYSYQLEKKYTKNEILEAYLNTIYFNNGVYGVGSAAQFYFSKPLKSLTVGEMAFICAIPNNPTLYDPLKHFDYTKSRQERLLKGLKDAGVITDKELKKAVKQKIKLDVEKREDKYPDYVSYVNDEFTQLVSESEGFDKRLQKASGKQKEKIENELSARVSTLMKDGVKIYTALDPYMQNQVVAQMNSKLPYADVQGGAAVINHQTHQIIALSGGKNYQKYDFNRAYQAYRQPGSSIKPLLDYGPYIEQTGATTSSTIDASKFCSKDYCPQNYNNRTYGTVTLDTAFKNSYNTPAIRMLDRVGIQKAFSYIEPYHFAKLVDSDYLLPAALGGFTNGMTPLEMTKAYTTFGNSGSYTPSHAITKVTDLKGKTLYKWNDKATQIFSVRTNMQLKKLMSSVVKSGTGKKAYFNAPYIGGKTGTSNDYHDMWFVGLTDTYTMGVWVGKDTPTSVEYLHSISPQLSIWKGTLQAAY.

The signal sequence occupies residues 1-21 (MTMLRKIIGWILLLCIIPLFA). The Proton donor; for transglycosylase activity role is filled by E96. The active-site Acyl-ester intermediate; for transpeptidase activity is the S388.

The protein in the N-terminal section; belongs to the glycosyltransferase 51 family. This sequence in the C-terminal section; belongs to the transpeptidase family. Post-translationally, the N-terminus is blocked.

The protein resides in the cell membrane. It carries out the reaction [GlcNAc-(1-&gt;4)-Mur2Ac(oyl-L-Ala-gamma-D-Glu-L-Lys-D-Ala-D-Ala)](n)-di-trans,octa-cis-undecaprenyl diphosphate + beta-D-GlcNAc-(1-&gt;4)-Mur2Ac(oyl-L-Ala-gamma-D-Glu-L-Lys-D-Ala-D-Ala)-di-trans,octa-cis-undecaprenyl diphosphate = [GlcNAc-(1-&gt;4)-Mur2Ac(oyl-L-Ala-gamma-D-Glu-L-Lys-D-Ala-D-Ala)](n+1)-di-trans,octa-cis-undecaprenyl diphosphate + di-trans,octa-cis-undecaprenyl diphosphate + H(+). The catalysed reaction is Preferential cleavage: (Ac)2-L-Lys-D-Ala-|-D-Ala. Also transpeptidation of peptidyl-alanyl moieties that are N-acyl substituents of D-alanine.. In terms of biological role, cell wall formation. Synthesis of cross-linked peptidoglycan from the lipid intermediates. The enzyme has a penicillin-insensitive transglycosylase N-terminal domain (formation of linear glycan strands) and a penicillin-sensitive transpeptidase C-terminal domain (cross-linking of the peptide subunits). Has a partially redundant function with PBP-2A (pbpA) during spore outgrowth. The chain is Penicillin-binding protein 4 from Bacillus subtilis (strain 168).